A 331-amino-acid polypeptide reads, in one-letter code: Ketol-acid reductoisomerase (NADP(+)) (331 aa).

In terms of domain architecture, KARI N-terminal Rossmann spans 2–182 (AKIYTDKDAS…GATRAGVIET (181 aa)). NADP(+)-binding positions include 25–28 (YGIQ), Arg48, Ser53, and 83–86 (DMEQ). Residue His108 is part of the active site. Gly134 serves as a coordination point for NADP(+). Positions 183–328 (TFAEETETDL…AEMRKLLFGR (146 aa)) constitute a KARI C-terminal knotted domain. Mg(2+)-binding residues include Asp191, Glu195, Glu227, and Glu231. Ser252 contacts substrate.

The protein belongs to the ketol-acid reductoisomerase family. Mg(2+) is required as a cofactor.

It carries out the reaction (2R)-2,3-dihydroxy-3-methylbutanoate + NADP(+) = (2S)-2-acetolactate + NADPH + H(+). The enzyme catalyses (2R,3R)-2,3-dihydroxy-3-methylpentanoate + NADP(+) = (S)-2-ethyl-2-hydroxy-3-oxobutanoate + NADPH + H(+). It functions in the pathway amino-acid biosynthesis; L-isoleucine biosynthesis; L-isoleucine from 2-oxobutanoate: step 2/4. Its pathway is amino-acid biosynthesis; L-valine biosynthesis; L-valine from pyruvate: step 2/4. Its function is as follows. Involved in the biosynthesis of branched-chain amino acids (BCAA). Catalyzes an alkyl-migration followed by a ketol-acid reduction of (S)-2-acetolactate (S2AL) to yield (R)-2,3-dihydroxy-isovalerate. In the isomerase reaction, S2AL is rearranged via a Mg-dependent methyl migration to produce 3-hydroxy-3-methyl-2-ketobutyrate (HMKB). In the reductase reaction, this 2-ketoacid undergoes a metal-dependent reduction by NADPH to yield (R)-2,3-dihydroxy-isovalerate. The protein is Ketol-acid reductoisomerase (NADP(+)) of Pyrobaculum islandicum (strain DSM 4184 / JCM 9189 / GEO3).